We begin with the raw amino-acid sequence, 1909 residues long: Receptor-type tyrosine-protein phosphatase F (1909 aa).

The signal sequence occupies residues 1-31 (MVPNTCTSVPLLPVGLPLLLLLSCIQFSSQA). The Extracellular segment spans residues 32–1266 (DSLPNFVRSP…RSVDQPEMLW (1235 aa)). 3 Ig-like C2-type domains span residues 35 to 125 (PNFV…AKLT), 137 to 225 (PTID…ANLY), and 233 to 315 (PRFS…AQVS). A disulfide bridge links Cys-56 with Cys-109. Position 68-77 (68-77 (WMKKGKKVSS)) interacts with heparin. An N-linked (GlcNAc...) asparagine glycan is attached at Asn-119. Cys-158 and Cys-208 are oxidised to a cystine. 2 N-linked (GlcNAc...) asparagine glycosylation sites follow: Asn-251 and Asn-296. Cys-254 and Cys-299 are oxidised to a cystine. Fibronectin type-III domains lie at 322-412 (PPTS…TGEQ), 417-511 (PPLH…TQQG), 515-604 (QPSS…TAQS), 609-706 (PPQD…TNED), 711-819 (PPRK…TTGA), 820-914 (VPGK…PEDV), 918-1013 (FPLN…TSPA), and 1014-1098 (FATS…TAPD). A disordered region spans residues 399–418 (GPPSEPVETRTGEQAPSSPP). Asn-721 carries N-linked (GlcNAc...) asparagine glycosylation. Asn-963 and Asn-966 each carry an N-linked (GlcNAc...) asparagine glycan. Residues 1267–1287 (VMGPVLAVVLIIIIVIAILLF) traverse the membrane as a helical segment. The Cytoplasmic segment spans residues 1288 to 1909 (KRKRASPLPK…YLGSFDHYAT (622 aa)). 2 Tyrosine-protein phosphatase domains span residues 1354–1609 (FSQE…LLEA) and 1641–1900 (MELE…ALEY). Substrate contacts are provided by residues Asp-1518, 1550 to 1556 (CSAGVGR), and Gln-1594. Residue Cys-1550 is the Phosphocysteine intermediate of the active site. The Phosphocysteine intermediate role is filled by Cys-1841.

Belongs to the protein-tyrosine phosphatase family. Receptor class 2A subfamily.

Its subcellular location is the membrane. The enzyme catalyses O-phospho-L-tyrosyl-[protein] + H2O = L-tyrosyl-[protein] + phosphate. In terms of biological role, possible cell adhesion receptor. It possesses an intrinsic protein tyrosine phosphatase activity (PTPase). The first PTPase domain has enzymatic activity, while the second one seems to affect the substrate specificity of the first one. This is Receptor-type tyrosine-protein phosphatase F (ptprf) from Danio rerio (Zebrafish).